The primary structure comprises 253 residues: Phosphate import ATP-binding protein PstB (253 aa).

The ABC transporter domain maps to 5–248; sequence IETINLHVYY…PEHELTEKYV (244 aa). 37–44 serves as a coordination point for ATP; the sequence is GPSGCGKS.

The protein belongs to the ABC transporter superfamily. Phosphate importer (TC 3.A.1.7) family. In terms of assembly, the complex is composed of two ATP-binding proteins (PstB), two transmembrane proteins (PstC and PstA) and a solute-binding protein (PstS).

It localises to the cell membrane. The enzyme catalyses phosphate(out) + ATP + H2O = ADP + 2 phosphate(in) + H(+). Part of the ABC transporter complex PstSACB involved in phosphate import. Responsible for energy coupling to the transport system. In Pyrococcus furiosus (strain ATCC 43587 / DSM 3638 / JCM 8422 / Vc1), this protein is Phosphate import ATP-binding protein PstB.